A 248-amino-acid chain; its full sequence is Granulin (248 aa).

Belongs to the polyhedrin family.

Functionally, component of the virus occlusion bodies, which are large proteinaceous structures, that protect the virus from the outside environment for extended periods until they are ingested by insect larvae. The chain is Granulin from Trichoplusia ni (Cabbage looper).